Reading from the N-terminus, the 123-residue chain is Large ribosomal subunit protein eL8 (123 aa).

Belongs to the eukaryotic ribosomal protein eL8 family. In terms of assembly, part of the 50S ribosomal subunit. Probably part of the RNase P complex.

It localises to the cytoplasm. Multifunctional RNA-binding protein that recognizes the K-turn motif in ribosomal RNA, the RNA component of RNase P, box H/ACA, box C/D and box C'/D' sRNAs. The polypeptide is Large ribosomal subunit protein eL8 (Methanosphaera stadtmanae (strain ATCC 43021 / DSM 3091 / JCM 11832 / MCB-3)).